We begin with the raw amino-acid sequence, 170 residues long: Cathelicidin antimicrobial peptide (170 aa).

The first 30 residues, 1-30 (MNTQWDSPSLGRWSLVLLLLGLVMPLAIVA), serve as a signal peptide directing secretion. The propeptide at 31–131 (QVLSYQEAVL…DISCDKDKRK (101 aa)) is cathelin-like domain (CLD). Disulfide bonds link Cys86–Cys97 and Cys108–Cys125. An active core region spans residues 150 to 162 (LKNIGQRIKDFFG).

The protein belongs to the cathelicidin family. In terms of assembly, monomer, homodimer or homotrimer (in vitro). Oligomerizes as tetra- or hexamer in solution (in vitro). In terms of processing, proteolytically cleaved by proteinase PRTN3 into antibacterial peptide LL-37. Proteolytically cleaved by cathepsin CTSG and neutrophil elastase ELANE. Post-translationally, resistant to proteolytic degradation in solution, and when bound to both zwitterionic (mimicking mammalian membranes) and negatively charged membranes (mimicking bacterial membranes). After secretion onto the skin surface, the CAMP gene product is processed by a serine protease-dependent mechanism into multiple novel antimicrobial peptides distinct from and shorter than cathelicidin LL-37. These peptides show enhanced antimicrobial action, acquiring the ability to kill skin pathogens such as S.aureus, E.coli and C.albicans. These peptides have lost the ability to stimulate CXCL8/IL8 release from keratinocytes. The peptides act synergistically, killing bacteria at lower concentrations when present together, and maintain activity at increased salt condition.

The protein localises to the secreted. The protein resides in the vesicle. In terms of biological role, antimicrobial protein that is an integral component of the innate immune system. Binds to bacterial lipopolysaccharides (LPS). Acts via neutrophil N-formyl peptide receptors to enhance the release of CXCL2. Postsecretory processing generates multiple cathelicidin antimicrobial peptides with various lengths which act as a topical antimicrobial defense in sweat on skin. The unprocessed precursor form, cathelicidin antimicrobial peptide, inhibits the growth of Gram-negative E.coli and E.aerogenes with efficiencies comparable to that of the mature peptide LL-37 (in vitro). Functionally, antimicrobial peptide that is an integral component of the innate immune system. Binds to bacterial lipopolysaccharides (LPS). Causes membrane permeabilization by forming transmembrane pores (in vitro). Causes lysis of E.coli. Exhibits antimicrobial activity against Gram-negative bacteria such as P.aeruginosa, S.typhimurium, E.aerogenes, E.coli and P.syringae, Gram-positive bacteria such as L.monocytogenes, S.epidermidis, S.pyogenes and S.aureus, as well as vancomycin-resistant enterococci (in vitro). Exhibits antimicrobial activity against methicillin-resistant S.aureus, P.mirabilis, and C.albicans in low-salt media, but not in media containing 100 mM NaCl (in vitro). Forms chiral supramolecular assemblies with quinolone signal (PQS) molecules of P.aeruginosa, which may lead to interference of bacterial quorum signaling and perturbance of bacterial biofilm formation. May form supramolecular fiber-like assemblies on bacterial membranes. Induces cytokine and chemokine producation as well as TNF/TNFA and CSF2/GMCSF production in normal human keratinocytes. Exhibits hemolytic activity against red blood cells. Exhibits antimicrobial activity against E.coli and B.megaterium (in vitro). In Ateles fusciceps (Brown-headed spider monkey), this protein is Cathelicidin antimicrobial peptide.